Reading from the N-terminus, the 327-residue chain is Opticin (327 aa).

An N-terminal signal peptide occupies residues 1–19; that stretch reads MKLPAFLSLLALVLLEAGT. Sulfotyrosine occurs at positions 61 and 67. Residues 111–148 form the LRRNT domain; that stretch reads VLGSPNSHGLPTCLICVCLGSSVYCDDADLENIPPLPK. 7 LRR repeats span residues 149–170, 173–194, 197–218, 219–237, 243–263, 264–285, and 295–315; these read TTTY…DFKG, KLKR…ALRL, ALQD…PPAI, EVLD…QPEA, KLQF…PLPP, SLRS…AFCD, and WLED…PSAY. A disulfide bridge connects residues C284 and C317.

The protein belongs to the small leucine-rich proteoglycan (SLRP) family. SLRP class III subfamily. In terms of assembly, homodimer. O-glycosylated. In terms of processing, proteolytically cleaved by MMP1, MMP2, MMP3, MMP7, MMP8, MMP9, ADAMTS4, and ADAMTS5. Proteolytically cleaved by MMP13. Post-translationally, sulfated on tyrosine residues. As to expression, ocular tissues, cartilage, ligament, skin, muscle and testes.

It localises to the secreted. Its subcellular location is the extracellular space. It is found in the extracellular matrix. Functionally, inhibits angiogenesis in the vitreous humor of the eye, and therefore represses neovascularization. Binds collagen fibrils. May be involved in collagen fiber organization via regulation of other members of the small leucine-rich repeat proteoglycan superfamily. This Canis lupus familiaris (Dog) protein is Opticin (OPTC).